The sequence spans 262 residues: MRFGLNIDHIVTLREVRKTYEPEILEALFIAKNTHKVDLITIHLREDRRHIQNEDVLRLLEISPLPINIECSINAAITDFLCSLKNKPSKVTIVPENRNEVTTEGGLDCSLKGLEEVIRAYHNKGIEVSLFIDPLKDALHFAREHQVKQVEFHTGVYANLHNALYSNANNQIHAISALKDKSPKELKEELHNAFLQLRRMSKEAFFMGITACAGHGLNYTNVKELLKIPSLRELNIGHSVVSKAVLVGLEKAILEMAQLIKR.

Asn6 contacts 3-amino-2-oxopropyl phosphate. A 1-deoxy-D-xylulose 5-phosphate-binding site is contributed by 8 to 9 (DH). Arg17 serves as a coordination point for 3-amino-2-oxopropyl phosphate. The Proton acceptor role is filled by His43. 1-deoxy-D-xylulose 5-phosphate-binding residues include Arg45 and His50. The active-site Proton acceptor is Glu70. 1-deoxy-D-xylulose 5-phosphate is bound at residue Thr102. Catalysis depends on His215, which acts as the Proton donor. Residues Gly216 and 237–238 (GH) each bind 3-amino-2-oxopropyl phosphate.

This sequence belongs to the PNP synthase family. In terms of assembly, homooctamer; tetramer of dimers.

It is found in the cytoplasm. It carries out the reaction 3-amino-2-oxopropyl phosphate + 1-deoxy-D-xylulose 5-phosphate = pyridoxine 5'-phosphate + phosphate + 2 H2O + H(+). Its pathway is cofactor biosynthesis; pyridoxine 5'-phosphate biosynthesis; pyridoxine 5'-phosphate from D-erythrose 4-phosphate: step 5/5. Its function is as follows. Catalyzes the complicated ring closure reaction between the two acyclic compounds 1-deoxy-D-xylulose-5-phosphate (DXP) and 3-amino-2-oxopropyl phosphate (1-amino-acetone-3-phosphate or AAP) to form pyridoxine 5'-phosphate (PNP) and inorganic phosphate. The polypeptide is Pyridoxine 5'-phosphate synthase (Helicobacter pylori (strain G27)).